The chain runs to 410 residues: Peptidase T (410 aa).

Position 79 (H79) interacts with Zn(2+). The active site involves D81. A Zn(2+)-binding site is contributed by D142. E176 serves as the catalytic Proton acceptor. The Zn(2+) site is built by E177, D199, and H381.

This sequence belongs to the peptidase M20B family. Requires Zn(2+) as cofactor.

Its subcellular location is the cytoplasm. The catalysed reaction is Release of the N-terminal residue from a tripeptide.. In terms of biological role, cleaves the N-terminal amino acid of tripeptides. The chain is Peptidase T from Bacillus thuringiensis (strain Al Hakam).